Reading from the N-terminus, the 309-residue chain is MDIQFLGTGAGQPSKARNVSSLALKLLDEINEVWLFDCGEGTQNRILETTIRPRKVSKIFITHLHGDHIFGLPGFLSSRAFQANEEQTDLEIYGPQGIKSFVLTSLRVSGSRLPYRIHFHEFDQDSLGKILETDKFTVYAEELDHTIFCVGYRVMQKDLEGTLDAEKLKAAGVPFGPLFGKIKNGQDLVLEDGTEIKAADYISAPRPGKIITILGDTRKTDASVRLAVNADVLVHESTYGKGDEKIARNHGHSTNMQAAQVAVEAGAKRLLLNHISARFLSKDISKLKKDAATIFENVHVVKDLEEVEI.

Zn(2+) is bound by residues histidine 63, histidine 65, aspartate 67, histidine 68, histidine 145, aspartate 216, and histidine 274. The active-site Proton acceptor is the aspartate 67.

This sequence belongs to the RNase Z family. As to quaternary structure, homodimer. Zn(2+) serves as cofactor.

The catalysed reaction is Endonucleolytic cleavage of RNA, removing extra 3' nucleotides from tRNA precursor, generating 3' termini of tRNAs. A 3'-hydroxy group is left at the tRNA terminus and a 5'-phosphoryl group is left at the trailer molecule.. Its function is as follows. Zinc phosphodiesterase, which displays some tRNA 3'-processing endonuclease activity. Probably involved in tRNA maturation, by removing a 3'-trailer from precursor tRNA. The chain is Ribonuclease Z from Streptococcus pneumoniae (strain 70585).